Consider the following 159-residue polypeptide: Ornithine decarboxylase antizyme (159 aa).

The protein belongs to the ODC antizyme family. Interacts with ODC1 and thereby sterically blocks ODC homodimerization.

In terms of biological role, ornithine decarboxylase (ODC) antizyme protein that negatively regulates ODC activity and intracellular polyamine biosynthesis and uptake in response to increased intracellular polyamine levels. Binds to ODC monomers, inhibiting the assembly of the functional ODC homodimer, and targets the monomers for ubiquitin-independent proteolytic destruction by the 26S proteasome. This is Ornithine decarboxylase antizyme from Caenorhabditis elegans.